Consider the following 319-residue polypeptide: MNPNYLDFEQPIADLEAKIQELRNASAGPAVNVEAEVHALQDKLRMRTAQIFRNLTSWQVLQLARHPSRPYTADYLRVMFDEFQELAGDRAFADDKAIMGGLARINGRAVMVIGHQKGRDTKEKIKRNFGMPKPEGYRKALRLMKMAERFGLPVLTLIDTAGAWPGIDAESRGQSEAIARNLIEMAELKVPIICTVIGEGGSGGALALGVGDRTVMLEYAVYSTITPEGCASILWKDAGKAKDAAEQLGLTAPRLKSLGLVDKVVREPTGGAHRNPTQMAKRLKAVLLNELDALDKLSTEQLLEQRYARLRSYGTYEAA.

The CoA carboxyltransferase C-terminal domain occupies 38-293; that stretch reads HALQDKLRMR…KAVLLNELDA (256 aa).

The protein belongs to the AccA family. In terms of assembly, acetyl-CoA carboxylase is a heterohexamer composed of biotin carboxyl carrier protein (AccB), biotin carboxylase (AccC) and two subunits each of ACCase subunit alpha (AccA) and ACCase subunit beta (AccD).

It is found in the cytoplasm. The enzyme catalyses N(6)-carboxybiotinyl-L-lysyl-[protein] + acetyl-CoA = N(6)-biotinyl-L-lysyl-[protein] + malonyl-CoA. The protein operates within lipid metabolism; malonyl-CoA biosynthesis; malonyl-CoA from acetyl-CoA: step 1/1. Component of the acetyl coenzyme A carboxylase (ACC) complex. First, biotin carboxylase catalyzes the carboxylation of biotin on its carrier protein (BCCP) and then the CO(2) group is transferred by the carboxyltransferase to acetyl-CoA to form malonyl-CoA. In Stenotrophomonas maltophilia (strain K279a), this protein is Acetyl-coenzyme A carboxylase carboxyl transferase subunit alpha.